We begin with the raw amino-acid sequence, 205 residues long: ATP phosphoribosyltransferase (205 aa).

It belongs to the ATP phosphoribosyltransferase family. Short subfamily. Heteromultimer composed of HisG and HisZ subunits.

Its subcellular location is the cytoplasm. The enzyme catalyses 1-(5-phospho-beta-D-ribosyl)-ATP + diphosphate = 5-phospho-alpha-D-ribose 1-diphosphate + ATP. The protein operates within amino-acid biosynthesis; L-histidine biosynthesis; L-histidine from 5-phospho-alpha-D-ribose 1-diphosphate: step 1/9. In terms of biological role, catalyzes the condensation of ATP and 5-phosphoribose 1-diphosphate to form N'-(5'-phosphoribosyl)-ATP (PR-ATP). Has a crucial role in the pathway because the rate of histidine biosynthesis seems to be controlled primarily by regulation of HisG enzymatic activity. This Nitratiruptor sp. (strain SB155-2) protein is ATP phosphoribosyltransferase.